Here is a 111-residue protein sequence, read N- to C-terminus: Large ribosomal subunit protein P1 (111 aa).

The interval 84 to 111 (PAEAAAAEEKKEEEKEESDEDMGFGLFD) is disordered.

The protein belongs to the eukaryotic ribosomal protein P1/P2 family. P1 and P2 exist as dimers at the large ribosomal subunit. Post-translationally, phosphorylated.

Plays an important role in the elongation step of protein synthesis. This is Large ribosomal subunit protein P1 from Aspergillus fumigatus (strain ATCC MYA-4609 / CBS 101355 / FGSC A1100 / Af293) (Neosartorya fumigata).